A 280-amino-acid chain; its full sequence is Type II restriction enzyme MboI (280 aa).

This sequence belongs to the DpnII type II restriction endonuclease family.

The enzyme catalyses Endonucleolytic cleavage of DNA to give specific double-stranded fragments with terminal 5'-phosphates.. Functionally, a P subtype restriction enzyme that recognizes the double-stranded unmethylated sequence 5'-GATC-3' and cleaves before G-1. The polypeptide is Type II restriction enzyme MboI (mboIR) (Moraxella bovis).